A 101-amino-acid chain; its full sequence is Urease subunit beta (101 aa).

The protein belongs to the urease beta subunit family. As to quaternary structure, heterotrimer of UreA (gamma), UreB (beta) and UreC (alpha) subunits. Three heterotrimers associate to form the active enzyme.

The protein resides in the cytoplasm. It carries out the reaction urea + 2 H2O + H(+) = hydrogencarbonate + 2 NH4(+). Its pathway is nitrogen metabolism; urea degradation; CO(2) and NH(3) from urea (urease route): step 1/1. The polypeptide is Urease subunit beta (Burkholderia multivorans (strain ATCC 17616 / 249)).